Consider the following 546-residue polypeptide: Nuclear pore complex protein Nup58 (546 aa).

Tandem repeats lie at residues 22–23 (FG), 36–37 (FG), 45–46 (FG), 64–65 (FG), 73–74 (FG), 82–83 (FG), 92–93 (FG), 101–102 (FG), 110–111 (FG), 119–120 (FG), 128–129 (FG), 137–138 (FG), 146–147 (FG), 155–156 (FG), 166–167 (FG), 197–198 (FG), and 199–200 (FG). The tract at residues 22 to 200 (FGARPATTTA…TTAPPAFGFG (179 aa)) is 17 X 2 AA repeats of F-G.

It belongs to the NUP58 family. In terms of assembly, component of the nuclear pore complex. Interacts with Nup54. Interacts (via C-terminus) with fs(1)Yb; this interaction occurs in a RNA-independent manner. Interacts with sbr/nxf1. Interacts with Nxt1. Post-translationally, O-glycosylated; contains O-GlcNAc. O-GlcNAcylation increases with increasing ambient temperature.

It localises to the nucleus. The protein resides in the nuclear pore complex. Functionally, component of the nuclear pore complex, a complex required for the trafficking across the nuclear membrane. Together with Nup54, required for transposable element silencing regulation in ovarian follicle cells. By interacting with the nuclear (Nxf1/Nxt1) and cytosolic (fs(1)Yb) components of the flamenco (flam) transcripts processing pathway, enables export and subsequent piRNA production. The polypeptide is Nuclear pore complex protein Nup58 (Drosophila melanogaster (Fruit fly)).